The primary structure comprises 248 residues: Large ribosomal subunit protein uL30 (248 aa).

N-acetylmethionine is present on Met-1. 4 consecutive repeat copies span residues Lys-7–Leu-18, Lys-19–Ile-30, Lys-31–Leu-42, and Arg-43–Ala-54. The 4 X 12 AA tandem repeats stretch occupies residues Lys-7 to Ala-54. Thr-17 is modified (phosphothreonine). At Lys-124 the chain carries N6-acetyllysine. Lys-127 is modified (N6-succinyllysine). Tyr-139 carries the phosphotyrosine modification.

Belongs to the universal ribosomal protein uL30 family. As to quaternary structure, component of the large ribosomal subunit. Homodimer. Interacts with DHX33.

Its subcellular location is the cytoplasm. Its function is as follows. Component of the large ribosomal subunit. The ribosome is a large ribonucleoprotein complex responsible for the synthesis of proteins in the cell. Binds to G-rich structures in 28S rRNA and in mRNAs. Plays a regulatory role in the translation apparatus; inhibits cell-free translation of mRNAs. This chain is Large ribosomal subunit protein uL30 (RPL7), found in Bos taurus (Bovine).